A 276-amino-acid polypeptide reads, in one-letter code: MRWEEKDIITEAKKSGFKAIPIFTKDFYSAIGVGENYSELEADVIIQRNTSHARALTTSLIFEGWNYNVVNDATSLFKCGNKLYTLSLLAKHNIKTPRTIVTFSKDKAVDLAKKIGFPAVIKPIEGSWGRMVAKAVDEDILYSFLEYQEYTTSQFRQIYLVQEFVKKPNRDIRIFVMGDEAPVGIYRVNERNWKTNTALGARALPLKIDDELRDLALKVRDIMGGFFLGIDIFEDPERGYLVNEVNGVPEYKNTVRVNNFNVSSYLLNKLREWIKK.

ATP contacts are provided by residues lysine 82, lysine 122, 126–132 (GSWGRMV), 162–173 (QEFVKKPNRDIR), arginine 187, and asparagine 196. The ATP-grasp domain occupies 86–271 (LSLLAKHNIK…VSSYLLNKLR (186 aa)). The Mg(2+) site is built by aspartate 231, glutamate 244, and asparagine 246. The N-[TS] motif that is essential for LysX substrate specificity signature appears at 253–254 (NT).

This sequence belongs to the RimK family. LysX subfamily. Homodimer. Mg(2+) serves as cofactor.

It carries out the reaction [amino-group carrier protein]-C-terminal-L-glutamate + L-2-aminoadipate + ATP = [amino-group carrier protein]-C-terminal-N-(1,4-dicarboxybutan-1-yl)-L-glutamine + ADP + phosphate + H(+). It functions in the pathway amino-acid biosynthesis; L-lysine biosynthesis via AAA pathway; L-lysine from L-alpha-aminoadipate (Thermus route): step 1/5. Its function is as follows. Catalyzes the ATP-dependent formation of a covalent bond between the amino group of alpha-aminoadipate (AAA) and the gamma-carboxyl group of the C-terminal glutamate residue in LysW. The polypeptide is Alpha-aminoadipate--LysW ligase LysX (lysX) (Sulfolobus acidocaldarius (strain ATCC 33909 / DSM 639 / JCM 8929 / NBRC 15157 / NCIMB 11770)).